A 381-amino-acid chain; its full sequence is 4-hydroxyphenylpyruvate dioxygenase (381 aa).

VOC domains lie at 22–156 and 184–338; these read GMDA…LVDR and AIDH…IFTK. Fe cation contacts are provided by histidine 187, histidine 270, and glutamate 349.

It belongs to the 4HPPD family. As to quaternary structure, homodimer. Fe cation is required as a cofactor.

The enzyme catalyses 3-(4-hydroxyphenyl)pyruvate + O2 = homogentisate + CO2. It participates in amino-acid degradation; L-phenylalanine degradation; acetoacetate and fumarate from L-phenylalanine: step 3/6. This chain is 4-hydroxyphenylpyruvate dioxygenase (hpd), found in Streptomyces avermitilis (strain ATCC 31267 / DSM 46492 / JCM 5070 / NBRC 14893 / NCIMB 12804 / NRRL 8165 / MA-4680).